The primary structure comprises 156 residues: Small ribosomal subunit protein uS7 (156 aa).

This sequence belongs to the universal ribosomal protein uS7 family. In terms of assembly, part of the 30S ribosomal subunit. Contacts proteins S9 and S11.

Its function is as follows. One of the primary rRNA binding proteins, it binds directly to 16S rRNA where it nucleates assembly of the head domain of the 30S subunit. Is located at the subunit interface close to the decoding center, probably blocks exit of the E-site tRNA. In Citrobacter koseri (strain ATCC BAA-895 / CDC 4225-83 / SGSC4696), this protein is Small ribosomal subunit protein uS7.